Here is a 161-residue protein sequence, read N- to C-terminus: Nucleotide-binding protein Rpic_2826 (161 aa).

It belongs to the YajQ family.

Functionally, nucleotide-binding protein. The sequence is that of Nucleotide-binding protein Rpic_2826 from Ralstonia pickettii (strain 12J).